Consider the following 941-residue polypeptide: MAGAAPRRLGCDALIVVGGSAMPRRVLHVPVHVRACNLTQELSTGEDARFCRPRPVNVERVRAVFAALYRACPIHVRTEPERVKLVLGRLLLGPVAVPCFCDGEVEGHGEHLVPTTQFCRGPLLYVHRRCCCGSVTAGRALSYHVLENHVATHVLRGLLSLTEWNRELPSLFCDCPGGGGASGTEERYAMACLPRDLSLHLDDYPYLMVEIGRVLSVSEVDDYVTAVSGYLGEAAAPRIQVHYKLLFGLNVRPQAPCALDATRDFFLLELQKLWLGVEYHHEVTSEFFGRVLAQLHRDRARVMMALRLPEQTVCHLSTFVLSRFKRQVLYFKLQVSYGKCRTGHADRSGGGGNGGNQGHHNLLCYRRLSVTFADTDTVWRNLFYVYYELARDLGSHGTEDRPVSRGYGVSCASRTSRLSPSESTVVSANGHALSSTALPTTSAGHKLSLPRDPAADRVRRYVCIISRLMYARYGERWRKHCQRRSETGEEEEEETLESGETDATPPFDFTGQQLRRAYQEHRRRKHLAVQRYAPCRRKLIGGMEFAEVTGVSLDRIAVNAFNTNRVINMKAALSSIAASGLGVRAPRLPKNMTHSFVMYKHTFKEPACTVSTFVSNDAVYINSLNVNIRGSYPEFLYSLGVYRLHVNIDHFFLPAVVCNSNSSLDVHGLEDQAVIRSERSKVYWTTNFPCMISHTNNVNVGWFKAATAIVPRVSGADLEAILLKELSCIKNMRDVCIDYGLHRVFTQLELRNSYQIPFLAKQLVLFLRACLLKLHGREKRLQLDRLVFEAAQRGLFDYSKNLTAHTKIKHTCALIGSRLANNVPKILARNKKVKLDHLGRNANVLTVCRHVEAHKIPRTRLKVLVEVLGALQSISGTPHTREVIHQTLFRLCSAAAATSGLCSSPPPLCVSSSSSVPSVPTSVSVDGSSEPTSPRARFASR.

N-linked (GlcNAc...) asparagine; by host glycosylation occurs at Asn37. Residues 482 to 508 are disordered; sequence QRRSETGEEEEEETLESGETDATPPFD. Positions 488-500 are enriched in acidic residues; it reads GEEEEEETLESGE. N-linked (GlcNAc...) asparagine; by host glycans are attached at residues Asn591, Asn661, and Asn801. The segment covering 910–929 has biased composition (low complexity); sequence VSSSSSVPSVPTSVSVDGSS. The segment at 910–941 is disordered; sequence VSSSSSVPSVPTSVSVDGSSEPTSPRARFASR.

The protein belongs to the herpesviridae UL87 family.

The protein resides in the host nucleus. Functions concordantly with UL87 to initiate transcription from over half of all active viral promoters in late infection, without affecting host transcription. Acts on and binds to viral early-late and late kinetic-class promoters. The polypeptide is Protein UL87 (UL87) (Homo sapiens (Human)).